The sequence spans 98 residues: UPF0473 protein LSL_1108 (98 aa).

This sequence belongs to the UPF0473 family.

The chain is UPF0473 protein LSL_1108 from Ligilactobacillus salivarius (strain UCC118) (Lactobacillus salivarius).